The sequence spans 84 residues: CLAVATA3/ESR (CLE)-related protein 13 (84 aa).

Residues 1 to 29 (MGRYTTDQVQVYVLVIVLCTFFSTLQARS) form the signal peptide. A disordered region spans residues 57 to 84 (KQVRDISGDRLSPAGPDPQHNGRSPPRK). A hydroxyproline mark is found at P69 and P72. Residue P72 is glycosylated (O-linked (Ara...) hydroxyproline).

It belongs to the CLV3/ESR signal peptide family. The O-glycosylation (arabinosylation) of the hydroxyproline Pro-72 enhances binding affinity of the CLE13p peptide for its receptor. Expressed in young nodules throughout the central tissue. Expressed in the apical region of elongated nodules, corresponding to the meristematic and early infection zones.

The protein localises to the secreted. It localises to the extracellular space. Signaling peptide involved in the regulation of nodulation. Moves from root to shoot to function with the receptor kinase SUNN, in a signaling pathway that plays roles during cellular differentiation, both at the onset of nodulation, and later during nodule meristem development and subsequent homeostasis. Interacts with SUNN signaling to control nodule numbers. SUNN is involved in the autoregulation of nodulation (AON), a long distance systemic signaling from root to shoot and back again, which allows legumes to limit the number of root nodules formed based on available nitrogen and previous rhizobial colonization. The protein is CLAVATA3/ESR (CLE)-related protein 13 of Medicago truncatula (Barrel medic).